A 593-amino-acid chain; its full sequence is MEDYKQRIKNKLNVVPMEPGCYLMKDRNDQVIYVGKAKKLRNRLRSYFTGAHDAKTTRLVGEIRRFEFIVTSSETESLLLELNLIKQYQPRYNILLKDDKSYPFIKITKEKYPRLLVTRTVKQGTGKYFGPYPNAYSAQETKKLLDRIYPYRKCDKMPDKLCLYYHIGQCLGPCVYDVDLSKYAQMTKEITDFLNGEDKTILKSLEERMLTASESLDFERAKEYRDLIQHIQNLTNKQKIMSSDKTIRDVFGYSVDKGWMCIQVFFIRQGNMIKRDTTMIPLQQTEEEEFYTFIGQFYSLNQHILPKEVHVPRNLDKEMIQSVVDTKIVQPARGPKKDMVDLAAHNAKVSLNNKFELISRDESRTIKAIEELGTQMGIQTPIRIEAFDNSNIQGVDPVSAMVTFIDGKPDKKNYRKYKIKTVKGPDDYKSMREVVRRRYSRVLNEGLPLPDLIIVDGGKGHMNGVIDVLQNELGLDIPVAGLQKNDKHQTSELLYGASAEIVPLKKNSQAFYLLHRIQDEVHRFAITFHRQTRQKTGLKSILDDIDGIGNKRKTLLLRSFGSIKKMKEATLEDFKNIGIPENVAKNLHEQLHK.

The GIY-YIG domain occupies 17–94 (MEPGCYLMKD…IKQYQPRYNI (78 aa)). The 36-residue stretch at 199–234 (KTILKSLEERMLTASESLDFERAKEYRDLIQHIQNL) folds into the UVR domain.

The protein belongs to the UvrC family. As to quaternary structure, interacts with UvrB in an incision complex.

It localises to the cytoplasm. The UvrABC repair system catalyzes the recognition and processing of DNA lesions. UvrC both incises the 5' and 3' sides of the lesion. The N-terminal half is responsible for the 3' incision and the C-terminal half is responsible for the 5' incision. The protein is UvrABC system protein C of Staphylococcus aureus (strain MSSA476).